We begin with the raw amino-acid sequence, 191 residues long: uncharacterized protein (191 aa).

Residues 1–23 form the signal peptide; sequence MKKTMSAITAAAAVTSCFTGFGA.

This is an uncharacterized protein from Bacillus subtilis (strain 168).